The following is a 281-amino-acid chain: Rhomboid protease AarA (281 aa).

The next 7 membrane-spanning stretches (helical) occupy residues 16-36 (FSLG…AVYF), 76-96 (MLHS…VIGI), 105-125 (FKLL…SAYW), 145-165 (IGVG…IYLI), 185-205 (QLYN…QSGV), 208-228 (AAHI…ILVP), and 233-253 (VANL…IYLY). Serine 150 (nucleophile) is an active-site residue. Histidine 210 (charge relay system) is an active-site residue.

This sequence belongs to the peptidase S54 family.

The protein localises to the cell membrane. It catalyses the reaction Cleaves type-1 transmembrane domains using a catalytic dyad composed of serine and histidine that are contributed by different transmembrane domains.. Rhomboid serine protease that catalyzes intramembrane proteolysis. Mediates quorum-sensing and the subsequent regulation of target genes via activation of the Tat protein export system. Catalyzes the proteolytic activation of TatA by removal of its N-terminal extension. This chain is Rhomboid protease AarA (aarA), found in Providencia stuartii.